The primary structure comprises 349 residues: Anthranilate phosphoribosyltransferase (349 aa).

5-phospho-alpha-D-ribose 1-diphosphate is bound by residues Gly87, 90–91 (GD), Thr95, 97–100 (NIST), 115–123 (KHGNRSVSS), and Ser127. Gly87 lines the anthranilate pocket. Ser99 contacts Mg(2+). Asn118 serves as a coordination point for anthranilate. Arg173 lines the anthranilate pocket. The Mg(2+) site is built by Asp231 and Glu232.

Belongs to the anthranilate phosphoribosyltransferase family. In terms of assembly, homodimer. Mg(2+) serves as cofactor.

It catalyses the reaction N-(5-phospho-beta-D-ribosyl)anthranilate + diphosphate = 5-phospho-alpha-D-ribose 1-diphosphate + anthranilate. Its pathway is amino-acid biosynthesis; L-tryptophan biosynthesis; L-tryptophan from chorismate: step 2/5. Functionally, catalyzes the transfer of the phosphoribosyl group of 5-phosphorylribose-1-pyrophosphate (PRPP) to anthranilate to yield N-(5'-phosphoribosyl)-anthranilate (PRA). The protein is Anthranilate phosphoribosyltransferase of Shewanella loihica (strain ATCC BAA-1088 / PV-4).